Reading from the N-terminus, the 735-residue chain is Post-transcriptional regulator MKT1 (735 aa).

An interaction with PBP1 region spans residues 475-722 (QVIYNTMEET…ANERMKRAQK (248 aa)).

The protein belongs to the XPG/RAD2 endonuclease family. In terms of assembly, forms a complex composed of at least MKT1, PBP1, XAC1 and LSM12. Within the complex, interacts (via C-terminus) with PBP1; the interaction is direct. Interacts with RNA-binding protein ZC3H11 (via MKT1-binding motif); the interaction is direct. May interact with RNA-binding proteins CFB1 and CFB2. Interacts with the EIF4E6-EIF4G5 translation initiation complex via EIF4G5; the interaction with EIF4G5 is direct.

The protein resides in the cytoplasm. It is found in the cytosol. It localises to the stress granule. Its function is as follows. Involved in post-transcriptional regulation of gene expression. Promotes mRNA stabilization by recruiting a complex containing PBP1, LSM12 and XAC1 to mRNAs. Recruited to mRNAs by sequence-specific RNA binding proteins. May regulate translation through interactions with the EIF4E6-EIF4G5 translation initiation complex. This Trypanosoma brucei brucei (strain 927/4 GUTat10.1) protein is Post-transcriptional regulator MKT1.